Here is a 139-residue protein sequence, read N- to C-terminus: Large ribosomal subunit protein eL32 (139 aa).

Belongs to the eukaryotic ribosomal protein eL32 family.

The protein is Large ribosomal subunit protein eL32 (RPL32) of Encephalitozoon cuniculi (strain GB-M1) (Microsporidian parasite).